The following is an 85-amino-acid chain: U4-theraphotoxin-Hhn1ad (85 aa).

The first 22 residues, 1–22 (MKVTLIAILTCAAVLVLHTTAA), serve as a signal peptide directing secretion. A propeptide spanning residues 23–48 (EELKTESQLMEVGMPDTELATVDEER) is cleaved from the precursor. Disulfide bonds link cysteine 52–cysteine 66, cysteine 56–cysteine 77, and cysteine 71–cysteine 82.

This sequence belongs to the neurotoxin 12 (Hwtx-2) family. 02 (Hwtx-2) subfamily. Expressed by the venom gland.

It is found in the secreted. In terms of biological role, postsynaptic neurotoxin. The polypeptide is U4-theraphotoxin-Hhn1ad (Cyriopagopus hainanus (Chinese bird spider)).